The chain runs to 139 residues: Flagellar basal body rod protein FlgB (139 aa).

Belongs to the flagella basal body rod proteins family. As to quaternary structure, the basal body constitutes a major portion of the flagellar organelle and consists of a number of rings mounted on a central rod. In Gram-negative bacteria, at least four rings, L, P, S and M are present, whereas Gram-positive bacteria lack the L and P rings. The rod consists of about 26 subunits of FlgG in the distal portion, and FlgB, FlgC and FlgF build up the proximal portion of the rod with about 6 subunits each. Rod assembly occurs by export via the flagellum-specific pathway of its constituent proteins and by their incorporation into the rod structure in the probable order of FlgB, FlgC, FlgF and FlgG. Another protein, FliE, also assembles onto the stable rod structure.

Its subcellular location is the bacterial flagellum basal body. Structural component of flagellum, the bacterial motility apparatus. Part of the rod structure of flagellar basal body. The chain is Flagellar basal body rod protein FlgB from Proteus mirabilis.